Here is a 351-residue protein sequence, read N- to C-terminus: Histidine-rich glycoprotein (351 aa).

The signal sequence occupies residues 1–23 (MFTSLKKVATFSFLVWISQYSGS). The propeptide occupies 24–47 (NSCSSSLVKHIPQTGSNLTFDRVL). Residue Asn-40 is glycosylated (N-linked (GlcNAc...) asparagine). Residues 57-91 (LHEEHHHHHPEEHHEPHHEEHHHHHPEEHHEPHHE) show a composition bias toward basic and acidic residues. The interval 57-351 (LHEEHHHHHP…DAHHHHHHHH (295 aa)) is disordered. A run of 6 repeats spans residues 59–74 (EEHHHHHPEEHHEPHH), 75–90 (EEHHHHHPEEHHEPHH), 91–107 (EEHHHHHPHPHHHHHHH), 108–123 (PPHHHHHLGHHHHHHH), 124–138 (AAHHHHHEEHHHHHH), and 139–153 (AAHHHHHEEHHHHHH). A 2 X 16 AA tandem repeats region spans residues 59-90 (EEHHHHHPEEHHEPHHEEHHHHHPEEHHEPHH). Positions 91–123 (EEHHHHHPHPHHHHHHHPPHHHHHLGHHHHHHH) are 2 X 17 AA tandem repeats. Basic residues predominate over residues 92–351 (EHHHHHPHPH…DAHHHHHHHH (260 aa)). The 2 X 15 AA tandem repeats stretch occupies residues 124–153 (AAHHHHHEEHHHHHHAAHHHHHEEHHHHHH). Residues 173 to 351 (APHHHHHHHH…DAHHHHHHHH (179 aa)) form an 18 X 10 AA tandem repeats region.

This chain is Histidine-rich glycoprotein, found in Plasmodium lophurae.